A 453-amino-acid chain; its full sequence is Fibrinogen gamma chain (453 aa).

Positions 1–26 (MSWSLHPRNLILYFYALLFLSSTCVA) are cleaved as a signal peptide. At serine 68 the chain carries Phosphoserine; by FAM20C. N-linked (GlcNAc...) (complex) asparagine glycosylation occurs at asparagine 78. Positions 170-416 (QIHDITGKDC…KTTMKIIPFN (247 aa)) constitute a Fibrinogen C-terminal domain. Cysteine 179 and cysteine 208 form a disulfide bridge. Asparagine 334 is a glycosylation site (N-linked (GlcNAc...) asparagine; in variant Asahi). Residues aspartate 344, aspartate 346, phenylalanine 348, and glycine 350 each coordinate Ca(2+). Cysteine 352 and cysteine 365 are disulfide-bonded. Residues 400 to 422 (TRWYSMKKTTMKIIPFNRLTIGE) are gamma-chain polymerization, binding amino end of another fibrin alpha chain. The tract at residues 423–437 (GQQHHLGGAKQVRPE) is platelet aggregation and Staphylococcus clumping. Glutamine 424 is covalently cross-linked (Isoglutamyl lysine isopeptide (Gln-Lys) (interchain with K-432)). A disordered region spans residues 424-453 (QQHHLGGAKQVRPEHPAETEYDSLYPEDDL). Lysine 432 is covalently cross-linked (Isoglutamyl lysine isopeptide (Lys-Gln) (interchain with Q-424)). Positions 442 to 453 (TEYDSLYPEDDL) are enriched in acidic residues. Tyrosine 444 and tyrosine 448 each carry sulfotyrosine.

As to quaternary structure, heterohexamer; disulfide linked. Contains 2 sets of 3 non-identical chains (alpha, beta and gamma). The 2 heterotrimers are in head to head conformation with the N-termini in a small central domain. Conversion of fibrinogen to fibrin is triggered by thrombin, which cleaves fibrinopeptides A and B from alpha and beta chains, and thus exposes the N-terminal polymerization sites responsible for the formation of the soft clot. The soft clot is converted into the hard clot by factor XIIIA which catalyzes the epsilon-(gamma-glutamyl)lysine cross-linking between gamma chains (stronger) and between alpha chains (weaker) of different monomers. In terms of processing, sulfation of C-terminal tyrosines increases affinity for thrombin. As to expression, detected in blood plasma (at protein level).

It localises to the secreted. Together with fibrinogen alpha (FGA) and fibrinogen beta (FGB), polymerizes to form an insoluble fibrin matrix. Has a major function in hemostasis as one of the primary components of blood clots. In addition, functions during the early stages of wound repair to stabilize the lesion and guide cell migration during re-epithelialization. Was originally thought to be essential for platelet aggregation, based on in vitro studies using anticoagulated blood. However, subsequent studies have shown that it is not absolutely required for thrombus formation in vivo. Enhances expression of SELP in activated platelets via an ITGB3-dependent pathway. Maternal fibrinogen is essential for successful pregnancy. Fibrin deposition is also associated with infection, where it protects against IFNG-mediated hemorrhage. May also facilitate the antibacterial immune response via both innate and T-cell mediated pathways. The chain is Fibrinogen gamma chain (FGG) from Homo sapiens (Human).